A 276-amino-acid polypeptide reads, in one-letter code: Ribosomal RNA small subunit methyltransferase A (276 aa).

The S-adenosyl-L-methionine site is built by N27, L29, G54, E75, D101, and N122.

This sequence belongs to the class I-like SAM-binding methyltransferase superfamily. rRNA adenine N(6)-methyltransferase family. RsmA subfamily.

It is found in the cytoplasm. It carries out the reaction adenosine(1518)/adenosine(1519) in 16S rRNA + 4 S-adenosyl-L-methionine = N(6)-dimethyladenosine(1518)/N(6)-dimethyladenosine(1519) in 16S rRNA + 4 S-adenosyl-L-homocysteine + 4 H(+). Its function is as follows. Specifically dimethylates two adjacent adenosines (A1518 and A1519) in the loop of a conserved hairpin near the 3'-end of 16S rRNA in the 30S particle. May play a critical role in biogenesis of 30S subunits. This Brucella melitensis biotype 1 (strain ATCC 23456 / CCUG 17765 / NCTC 10094 / 16M) protein is Ribosomal RNA small subunit methyltransferase A.